The primary structure comprises 68 residues: Small ribosomal subunit protein bS21 (68 aa).

The protein belongs to the bacterial ribosomal protein bS21 family.

The polypeptide is Small ribosomal subunit protein bS21 (Dinoroseobacter shibae (strain DSM 16493 / NCIMB 14021 / DFL 12)).